A 224-amino-acid polypeptide reads, in one-letter code: Glutathione S-transferase U4 (224 aa).

Residues Glu-6–Pro-85 form the GST N-terminal domain. Glutathione-binding positions include Ser-16–Pro-17, Asn-42–Lys-43, Lys-56–Val-57, and Glu-69–Ser-70. Residues Asp-90–Val-217 form the GST C-terminal domain. Position 151 is a phosphothreonine (Thr-151).

This sequence belongs to the GST superfamily. Tau family.

It localises to the cytoplasm. The protein localises to the cytosol. It carries out the reaction RX + glutathione = an S-substituted glutathione + a halide anion + H(+). In terms of biological role, may be involved in the conjugation of reduced glutathione to a wide number of exogenous and endogenous hydrophobic electrophiles and have a detoxification role against certain herbicides. The sequence is that of Glutathione S-transferase U4 (GSTU4) from Arabidopsis thaliana (Mouse-ear cress).